The sequence spans 74 residues: Translation initiation factor IF-1 (74 aa).

One can recognise an S1-like domain in the interval Met1–Arg72.

Belongs to the IF-1 family. In terms of assembly, component of the 30S ribosomal translation pre-initiation complex which assembles on the 30S ribosome in the order IF-2 and IF-3, IF-1 and N-formylmethionyl-tRNA(fMet); mRNA recruitment can occur at any time during PIC assembly.

It localises to the cytoplasm. One of the essential components for the initiation of protein synthesis. Stabilizes the binding of IF-2 and IF-3 on the 30S subunit to which N-formylmethionyl-tRNA(fMet) subsequently binds. Helps modulate mRNA selection, yielding the 30S pre-initiation complex (PIC). Upon addition of the 50S ribosomal subunit IF-1, IF-2 and IF-3 are released leaving the mature 70S translation initiation complex. The protein is Translation initiation factor IF-1 of Ureaplasma parvum serovar 3 (strain ATCC 700970).